Reading from the N-terminus, the 143-residue chain is Large ribosomal subunit protein uL11 (143 aa).

This sequence belongs to the universal ribosomal protein uL11 family. Part of the ribosomal stalk of the 50S ribosomal subunit. Interacts with L10 and the large rRNA to form the base of the stalk. L10 forms an elongated spine to which L12 dimers bind in a sequential fashion forming a multimeric L10(L12)X complex. One or more lysine residues are methylated.

Functionally, forms part of the ribosomal stalk which helps the ribosome interact with GTP-bound translation factors. This Thioalkalivibrio sulfidiphilus (strain HL-EbGR7) protein is Large ribosomal subunit protein uL11.